A 360-amino-acid chain; its full sequence is Dual-specificity RNA methyltransferase RlmN (360 aa).

Catalysis depends on glutamate 91, which acts as the Proton acceptor. The region spanning 110-343 (RSEKYTVCIS…CTIRESKGLD (234 aa)) is the Radical SAM core domain. Cysteine 117 and cysteine 348 form a disulfide bridge. The [4Fe-4S] cluster site is built by cysteine 124, cysteine 128, and cysteine 131. Residues 174–175 (GE), serine 206, 229–231 (SLH), and asparagine 305 contribute to the S-adenosyl-L-methionine site. Cysteine 348 serves as the catalytic S-methylcysteine intermediate.

Belongs to the radical SAM superfamily. RlmN family. It depends on [4Fe-4S] cluster as a cofactor.

The protein localises to the cytoplasm. It carries out the reaction adenosine(2503) in 23S rRNA + 2 reduced [2Fe-2S]-[ferredoxin] + 2 S-adenosyl-L-methionine = 2-methyladenosine(2503) in 23S rRNA + 5'-deoxyadenosine + L-methionine + 2 oxidized [2Fe-2S]-[ferredoxin] + S-adenosyl-L-homocysteine. It catalyses the reaction adenosine(37) in tRNA + 2 reduced [2Fe-2S]-[ferredoxin] + 2 S-adenosyl-L-methionine = 2-methyladenosine(37) in tRNA + 5'-deoxyadenosine + L-methionine + 2 oxidized [2Fe-2S]-[ferredoxin] + S-adenosyl-L-homocysteine. Functionally, specifically methylates position 2 of adenine 2503 in 23S rRNA and position 2 of adenine 37 in tRNAs. m2A2503 modification seems to play a crucial role in the proofreading step occurring at the peptidyl transferase center and thus would serve to optimize ribosomal fidelity. The chain is Dual-specificity RNA methyltransferase RlmN from Aliarcobacter butzleri (strain RM4018) (Arcobacter butzleri).